We begin with the raw amino-acid sequence, 142 residues long: MSSSSHKRIIGIDFGTKRIGVALSDPLRMFAQPLGTFDMEGLVRVLSRVRDDEGIELVVVGYPMSDKGEENRMTGVIDRFVAELRESFPGTLIETFDEHRSSRTAMKILAASGSSRKKRNEKGRLDTAAACLILQGYLDSHS.

This sequence belongs to the YqgF nuclease family.

The protein localises to the cytoplasm. In terms of biological role, could be a nuclease involved in processing of the 5'-end of pre-16S rRNA. The polypeptide is Putative pre-16S rRNA nuclease (Chlorobaculum tepidum (strain ATCC 49652 / DSM 12025 / NBRC 103806 / TLS) (Chlorobium tepidum)).